Reading from the N-terminus, the 555-residue chain is 2-isopropylmalate synthase (555 aa).

Positions 30–303 (PIWCSVDLRD…DPGLDCTDIN (274 aa)) constitute a Pyruvate carboxyltransferase domain. Mg(2+) is bound by residues Asp39, His242, His244, and Asn278. The tract at residues 437–555 (QPDARIKFVD…VSAANRVIAK (119 aa)) is regulatory domain.

Belongs to the alpha-IPM synthase/homocitrate synthase family. LeuA type 2 subfamily. Homodimer. Mg(2+) is required as a cofactor.

It is found in the cytoplasm. It catalyses the reaction 3-methyl-2-oxobutanoate + acetyl-CoA + H2O = (2S)-2-isopropylmalate + CoA + H(+). It functions in the pathway amino-acid biosynthesis; L-leucine biosynthesis; L-leucine from 3-methyl-2-oxobutanoate: step 1/4. Functionally, catalyzes the condensation of the acetyl group of acetyl-CoA with 3-methyl-2-oxobutanoate (2-ketoisovalerate) to form 3-carboxy-3-hydroxy-4-methylpentanoate (2-isopropylmalate). The protein is 2-isopropylmalate synthase of Brucella melitensis biotype 1 (strain ATCC 23456 / CCUG 17765 / NCTC 10094 / 16M).